We begin with the raw amino-acid sequence, 142 residues long: Heat shock protein HSP.16.4 (142 aa).

Residues 27–142 form the sHSP domain; sequence NLFNDLKSNL…KEIKTSIPIE (116 aa).

It belongs to the small heat shock protein (HSP20) family.

The protein localises to the cytoplasm. This Streptococcus thermophilus protein is Heat shock protein HSP.16.4.